The sequence spans 222 residues: Phosphoribosylformylglycinamidine synthase subunit PurQ (222 aa).

In terms of domain architecture, Glutamine amidotransferase type-1 spans 3–222 (AAVVVFPGSN…RALAGALTPA (220 aa)). C86 functions as the Nucleophile in the catalytic mechanism. Residues H194 and E196 contribute to the active site.

As to quaternary structure, part of the FGAM synthase complex composed of 1 PurL, 1 PurQ and 2 PurS subunits.

The protein resides in the cytoplasm. The catalysed reaction is N(2)-formyl-N(1)-(5-phospho-beta-D-ribosyl)glycinamide + L-glutamine + ATP + H2O = 2-formamido-N(1)-(5-O-phospho-beta-D-ribosyl)acetamidine + L-glutamate + ADP + phosphate + H(+). It catalyses the reaction L-glutamine + H2O = L-glutamate + NH4(+). It participates in purine metabolism; IMP biosynthesis via de novo pathway; 5-amino-1-(5-phospho-D-ribosyl)imidazole from N(2)-formyl-N(1)-(5-phospho-D-ribosyl)glycinamide: step 1/2. Its function is as follows. Part of the phosphoribosylformylglycinamidine synthase complex involved in the purines biosynthetic pathway. Catalyzes the ATP-dependent conversion of formylglycinamide ribonucleotide (FGAR) and glutamine to yield formylglycinamidine ribonucleotide (FGAM) and glutamate. The FGAM synthase complex is composed of three subunits. PurQ produces an ammonia molecule by converting glutamine to glutamate. PurL transfers the ammonia molecule to FGAR to form FGAM in an ATP-dependent manner. PurS interacts with PurQ and PurL and is thought to assist in the transfer of the ammonia molecule from PurQ to PurL. This Ruegeria pomeroyi (strain ATCC 700808 / DSM 15171 / DSS-3) (Silicibacter pomeroyi) protein is Phosphoribosylformylglycinamidine synthase subunit PurQ.